The following is a 503-amino-acid chain: Drimenol monooxygenase (503 aa).

A helical membrane pass occupies residues 7–23; that stretch reads MICIVVSGLLLYSSRTS. S471 contacts heme.

It belongs to the cytochrome P450 family. Heme serves as cofactor.

It is found in the membrane. The catalysed reaction is (5S,9S,10S)-drim-7-en-11-ol + reduced [NADPH--hemoprotein reductase] + O2 = (5S,10S)-(9R)-7-drimene-11,12-diol + oxidized [NADPH--hemoprotein reductase] + H2O + H(+). Its function is as follows. Catalyzes the conversion of drimenol to drimendiol, a precursor of the sesquiterpenoid polygodial. Polygodial has been shown to be an antifeedant for a number of herbivorous insects. In Persicaria hydropiper (Marshpepper knotweed), this protein is Drimenol monooxygenase.